A 106-amino-acid chain; its full sequence is MIITTTEQVPGYRVKEILGVVCGNVVMSKHLGKDIAAAFKTLAGGEIKGYTEMLTEARNIALERMIKEAEKLGADAVIGFRYSSSTIMSGAAEILAYGTAVKLEKI.

Belongs to the UPF0145 family.

In Thermotoga petrophila (strain ATCC BAA-488 / DSM 13995 / JCM 10881 / RKU-1), this protein is UPF0145 protein Tpet_0165.